The chain runs to 317 residues: Inositol oxygenase 2 (317 aa).

Substrate is bound by residues Arg-57 and 115–117 (DES). 3 residues coordinate Fe cation: His-128, His-153, and Asp-154. Residues Lys-157 and 174–175 (GD) each bind substrate. Fe cation is bound by residues His-226, His-252, and Asp-285. A substrate-binding site is contributed by 252–253 (HS).

This sequence belongs to the myo-inositol oxygenase family. Requires Fe cation as cofactor. Expressed mainly in roots, stems, flowers and siliques. Low expression in leaves.

Its subcellular location is the cytoplasm. It catalyses the reaction myo-inositol + O2 = D-glucuronate + H2O + H(+). It participates in polyol metabolism; myo-inositol degradation into D-glucuronate; D-glucuronate from myo-inositol: step 1/1. Functionally, involved in the biosynthesis of UDP-glucuronic acid (UDP-GlcA), providing nucleotide sugars for cell-wall polymers. May be also involved in plant ascorbate biosynthesis. The protein is Inositol oxygenase 2 (MIOX2) of Arabidopsis thaliana (Mouse-ear cress).